The following is a 230-amino-acid chain: Prolactin-6A1 (230 aa).

Positions 1 to 29 (MLSLSQPCFSGTLLMLLASNFLLWKNVAP) are cleaved as a signal peptide. The N-linked (GlcNAc...) asparagine glycan is linked to N57. Intrachain disulfides connect C89–C205 and C222–C230.

The protein belongs to the somatotropin/prolactin family. In terms of tissue distribution, expressed in both placenta and decidual tissues. Detected first in deciduals cells early in gestation and in trophoblasts later in pregnancy.

It localises to the secreted. This chain is Prolactin-6A1 (Prl6a1), found in Mus musculus (Mouse).